Consider the following 146-residue polypeptide: MSSRTVGSLRHRVRAAALQALFELDQTTHDLDSVVARISDDEMFSAEGRDFFARIVNGAWVNRQEIDDLIAKIAPSWPVHQMPGVDIAVLRIALFEILYDAAADKAPVKAVINEAVELAKHFGSDNSGRFVNGVLSTVVNKPESEE.

It belongs to the NusB family.

Involved in transcription antitermination. Required for transcription of ribosomal RNA (rRNA) genes. Binds specifically to the boxA antiterminator sequence of the ribosomal RNA (rrn) operons. This Herpetosiphon aurantiacus (strain ATCC 23779 / DSM 785 / 114-95) protein is Transcription antitermination protein NusB.